The sequence spans 235 residues: Ribitol-5-phosphate cytidylyltransferase (235 aa).

CTP contacts are provided by residues 7 to 10 (LAGG), 82 to 88 (GADRNTS), and S113.

This sequence belongs to the IspD/TarI cytidylyltransferase family. TarI subfamily.

It carries out the reaction D-ribitol 5-phosphate + CTP + H(+) = CDP-L-ribitol + diphosphate. Its pathway is cell wall biogenesis; poly(ribitol phosphate) teichoic acid biosynthesis. In terms of biological role, catalyzes the transfer of the cytidylyl group of CTP to D-ribitol 5-phosphate. The polypeptide is Ribitol-5-phosphate cytidylyltransferase (Streptococcus pneumoniae serotype 19F (strain G54)).